Reading from the N-terminus, the 557-residue chain is Urocanate hydratase (557 aa).

Residues Gly-52–Gly-53, Gln-130, Gly-176–Gly-178, Glu-196, Arg-201, Asn-242–Ala-243, Gln-263–His-267, Tyr-273–Leu-274, and Tyr-322 contribute to the NAD(+) site. Cys-410 is a catalytic residue. Position 492 (Gly-492) interacts with NAD(+).

The protein belongs to the urocanase family. The cofactor is NAD(+).

The protein localises to the cytoplasm. The catalysed reaction is 4-imidazolone-5-propanoate = trans-urocanate + H2O. It functions in the pathway amino-acid degradation; L-histidine degradation into L-glutamate; N-formimidoyl-L-glutamate from L-histidine: step 2/3. Functionally, catalyzes the conversion of urocanate to 4-imidazolone-5-propionate. This is Urocanate hydratase from Pseudoalteromonas translucida (strain TAC 125).